The chain runs to 801 residues: Phenylalanine--tRNA ligase beta subunit (801 aa).

The tRNA-binding domain maps to 39–152 (ARAFSGVVVG…TDAPIGTDIR (114 aa)). One can recognise a B5 domain in the interval 407–482 (PARAPITLPI…RIYGYDNIPS (76 aa)). 4 residues coordinate Mg(2+): Asp-460, Asp-466, Glu-469, and Glu-470. Residues 706–799 (SKFPQVRRDI…LTVEHSAQLR (94 aa)) enclose the FDX-ACB domain.

It belongs to the phenylalanyl-tRNA synthetase beta subunit family. Type 1 subfamily. Tetramer of two alpha and two beta subunits. Mg(2+) serves as cofactor.

It localises to the cytoplasm. It carries out the reaction tRNA(Phe) + L-phenylalanine + ATP = L-phenylalanyl-tRNA(Phe) + AMP + diphosphate + H(+). The polypeptide is Phenylalanine--tRNA ligase beta subunit (Psychrobacter arcticus (strain DSM 17307 / VKM B-2377 / 273-4)).